We begin with the raw amino-acid sequence, 248 residues long: Undecaprenyl-diphosphatase (248 aa).

8 helical membrane passes run 4 to 24, 40 to 60, 74 to 94, 101 to 121, 134 to 154, 174 to 194, 201 to 221, and 228 to 248; these read IVLG…SGHL, FAFL…KEIV, YSLV…GFLF, SFSN…SLFV, ISYI…FPGI, ALKY…ILET, SYIL…LLIL, and KKLK…FFVG.

This sequence belongs to the UppP family.

It localises to the cell inner membrane. It catalyses the reaction di-trans,octa-cis-undecaprenyl diphosphate + H2O = di-trans,octa-cis-undecaprenyl phosphate + phosphate + H(+). Catalyzes the dephosphorylation of undecaprenyl diphosphate (UPP). Confers resistance to bacitracin. This is Undecaprenyl-diphosphatase from Thermosipho africanus (strain TCF52B).